The primary structure comprises 358 residues: UDP-N-acetylglucosamine--N-acetylmuramyl-(pentapeptide) pyrophosphoryl-undecaprenol N-acetylglucosamine transferase (358 aa).

Residues 11 to 13, N125, R162, S196, and Q288 contribute to the UDP-N-acetyl-alpha-D-glucosamine site; that span reads TAG.

This sequence belongs to the glycosyltransferase 28 family. MurG subfamily.

It localises to the cell membrane. The catalysed reaction is di-trans,octa-cis-undecaprenyl diphospho-N-acetyl-alpha-D-muramoyl-L-alanyl-D-glutamyl-meso-2,6-diaminopimeloyl-D-alanyl-D-alanine + UDP-N-acetyl-alpha-D-glucosamine = di-trans,octa-cis-undecaprenyl diphospho-[N-acetyl-alpha-D-glucosaminyl-(1-&gt;4)]-N-acetyl-alpha-D-muramoyl-L-alanyl-D-glutamyl-meso-2,6-diaminopimeloyl-D-alanyl-D-alanine + UDP + H(+). Its pathway is cell wall biogenesis; peptidoglycan biosynthesis. Its function is as follows. Cell wall formation. Catalyzes the transfer of a GlcNAc subunit on undecaprenyl-pyrophosphoryl-MurNAc-pentapeptide (lipid intermediate I) to form undecaprenyl-pyrophosphoryl-MurNAc-(pentapeptide)GlcNAc (lipid intermediate II). This Leifsonia xyli subsp. xyli (strain CTCB07) protein is UDP-N-acetylglucosamine--N-acetylmuramyl-(pentapeptide) pyrophosphoryl-undecaprenol N-acetylglucosamine transferase.